The chain runs to 1106 residues: Protein kinase C (1106 aa).

One can recognise an REM-1 1 domain in the interval 1–67 (MDGDDLIASV…MRELQLRQMK (67 aa)). The disordered stretch occupies residues 65 to 138 (QMKQEGASPT…PRPFAPVPKA (74 aa)). Pro residues predominate over residues 79 to 93 (PPNPDGSAPVPPPKD). The 78-residue stretch at 149-226 (KYDTPYLGPK…LKRYEDLHVD (78 aa)) folds into the REM-1 2 domain. One can recognise a C2 domain in the interval 232 to 350 (APDDESLSTP…MRRKKIESEF (119 aa)). Residues 361 to 370 (MEHGAAHGRQ) are compositionally biased toward basic and acidic residues. The disordered stretch occupies residues 361–400 (MEHGAAHGRQDAGGAPGSSNRPPSGGHSGGPGQGYAGGAP). Residues 386 to 400 (GHSGGPGQGYAGGAP) are compositionally biased toward gly residues. 2 consecutive Phorbol-ester/DAG-type zinc fingers follow at residues 460–508 (GHKF…VTKC) and 528–578 (PHRF…PDFC). 2 stretches are compositionally biased toward polar residues: residues 600 to 609 (KSASVSSGLS) and 658 to 668 (YIPPQSPTAAQ). Disordered stretches follow at residues 600–625 (KSASVSSGLSGRTLRPGGPPQAPQDN) and 658–719 (YIPP…HAHY). Residues 683–693 (AAAAAAAAAAA) are compositionally biased toward low complexity. Positions 781–1040 (FNFLAVLGKG…AQEVMSHAFF (260 aa)) constitute a Protein kinase domain. Residues 787–795 (LGKGNFGKV) and lysine 810 each bind ATP. Aspartate 906 functions as the Proton acceptor in the catalytic mechanism. The region spanning 1041–1106 (RNINWDDIYH…RGFSYTADFA (66 aa)) is the AGC-kinase C-terminal domain. Threonine 1082 carries the post-translational modification Phosphothreonine. Serine 1100 is subject to Phosphoserine. Tyrosine 1101 is subject to Phosphotyrosine.

This sequence belongs to the protein kinase superfamily. AGC Ser/Thr protein kinase family. PKC subfamily. In terms of assembly, interacts with hsp90.

It catalyses the reaction L-seryl-[protein] + ATP = O-phospho-L-seryl-[protein] + ADP + H(+). It carries out the reaction L-threonyl-[protein] + ATP = O-phospho-L-threonyl-[protein] + ADP + H(+). In terms of biological role, protein kinase C; part of cell wall integrity (CWI) signaling pathway composed of pkcA, the bck1-mkk2-mpka MAPK cascade and the downstream rlmA transcription regulator. The CWI signaling pathway regulates cell wall integrity and pyomelanin formation. CWI also controls oxidative stress response, gliotoxin production, iron adaptation and asexual development. Finally, CWI is constitutively required for A.fumigatus to cope with the temperature increase found in the mammalian lung environment, during infection. Modulates the expression of fumiquinazoline cluster during conidiogenesis. The protein is Protein kinase C of Aspergillus fumigatus (strain ATCC MYA-4609 / CBS 101355 / FGSC A1100 / Af293) (Neosartorya fumigata).